The primary structure comprises 227 residues: MEQPVGQPAYVLHSRAYKETSALVDFFTPQGRMRAVLRRARGKGGSLVRPFVLLELELRGRGELKNVGRMDSSGIAAWLHGDALFSGLYLNELLMRLLPAEAPFPAIFEHYTLTLQALAEGRPLEPLLRSFEWRLLDELGYAFSLSQDVNDQPIAADGLYRLRVDAGLERVELLQPGLFRGIELLALAEADWDAPGALLAAKRLMRQALAVHLGAKPLVSRELFRKR.

Belongs to the RecO family.

Its function is as follows. Involved in DNA repair and RecF pathway recombination. This is DNA repair protein RecO from Pseudomonas putida (strain ATCC 700007 / DSM 6899 / JCM 31910 / BCRC 17059 / LMG 24140 / F1).